The primary structure comprises 148 residues: SsrA-binding protein (148 aa).

A disordered region spans residues 119 to 148; the sequence is AKGKKQHDKRQSMKEADWKREKQRLIKHTR. The segment covering 127 to 142 has biased composition (basic and acidic residues); it reads KRQSMKEADWKREKQR.

The protein belongs to the SmpB family.

It localises to the cytoplasm. Required for rescue of stalled ribosomes mediated by trans-translation. Binds to transfer-messenger RNA (tmRNA), required for stable association of tmRNA with ribosomes. tmRNA and SmpB together mimic tRNA shape, replacing the anticodon stem-loop with SmpB. tmRNA is encoded by the ssrA gene; the 2 termini fold to resemble tRNA(Ala) and it encodes a 'tag peptide', a short internal open reading frame. During trans-translation Ala-aminoacylated tmRNA acts like a tRNA, entering the A-site of stalled ribosomes, displacing the stalled mRNA. The ribosome then switches to translate the ORF on the tmRNA; the nascent peptide is terminated with the 'tag peptide' encoded by the tmRNA and targeted for degradation. The ribosome is freed to recommence translation, which seems to be the essential function of trans-translation. The chain is SsrA-binding protein from Neisseria gonorrhoeae (strain ATCC 700825 / FA 1090).